Here is a 172-residue protein sequence, read N- to C-terminus: uncharacterized protein (172 aa).

4 helical membrane-spanning segments follow: residues 46–66 (MFSI…FLYP), 76–96 (LLSL…VGLF), 104–124 (WKFL…LGWS), and 129–149 (FFYA…FTEI).

It is found in the endoplasmic reticulum membrane. This is an uncharacterized protein from Schizosaccharomyces pombe (strain 972 / ATCC 24843) (Fission yeast).